The chain runs to 173 residues: MILLAAKGLSLLDVNPGLVVWTLITFLVVVLVLKKFAWDVILKALDERAQAVQNDIEKASELRLEAEALLKDYEARLNSAKDEANAIVAEARSDALKLKNKLLEETNQEVKAQKDQAVKEIELAKGKALEQLQTQFVEMTITIAGKVLEKQLKAEDYKAFIETELNKLGKLSA.

A helical membrane pass occupies residues L12–V32.

This sequence belongs to the ATPase B chain family. F-type ATPases have 2 components, F(1) - the catalytic core - and F(0) - the membrane proton channel. F(1) has five subunits: alpha(3), beta(3), gamma(1), delta(1), epsilon(1). F(0) has three main subunits: a(1), b(2) and c(10-14). The alpha and beta chains form an alternating ring which encloses part of the gamma chain. F(1) is attached to F(0) by a central stalk formed by the gamma and epsilon chains, while a peripheral stalk is formed by the delta and b chains.

Its subcellular location is the cell inner membrane. In terms of biological role, f(1)F(0) ATP synthase produces ATP from ADP in the presence of a proton or sodium gradient. F-type ATPases consist of two structural domains, F(1) containing the extramembraneous catalytic core and F(0) containing the membrane proton channel, linked together by a central stalk and a peripheral stalk. During catalysis, ATP synthesis in the catalytic domain of F(1) is coupled via a rotary mechanism of the central stalk subunits to proton translocation. Component of the F(0) channel, it forms part of the peripheral stalk, linking F(1) to F(0). This chain is ATP synthase subunit b, found in Leptospira borgpetersenii serovar Hardjo-bovis (strain JB197).